Consider the following 291-residue polypeptide: Phosphate-binding protein PstS 2 (291 aa).

The N-terminal stretch at 1–21 (MKFKKMLTLAAIGLSGFGLVA) is a signal peptide. Cys-22 is lipidated: N-palmitoyl cysteine. Cys-22 carries the S-diacylglycerol cysteine lipid modification.

This sequence belongs to the PstS family. The complex is composed of two ATP-binding proteins (PstB), two transmembrane proteins (PstC and PstA) and a solute-binding protein (PstS).

The protein localises to the cell membrane. Functionally, part of the ABC transporter complex PstSACB involved in phosphate import. In Streptococcus pneumoniae serotype 4 (strain ATCC BAA-334 / TIGR4), this protein is Phosphate-binding protein PstS 2 (pstS2).